Consider the following 102-residue polypeptide: Glutaredoxin 1 (102 aa).

Positions 1 to 96 (MNKAILHTII…KLLENQPKTT (96 aa)) constitute a Glutaredoxin domain. The cysteines at positions 17 and 20 are disulfide-linked.

The protein belongs to the glutaredoxin family. In terms of assembly, monomer.

The protein localises to the cytoplasm. Its function is as follows. Has a glutathione-disulfide oxidoreductase activity in the presence of NADPH and glutathione reductase. Reduces low molecular weight disulfides and proteins. This Rickettsia conorii (strain ATCC VR-613 / Malish 7) protein is Glutaredoxin 1 (grxC1).